The following is a 382-amino-acid chain: 6-oxocyclohex-1-ene-1-carbonyl-CoA hydrolase (382 aa).

Belongs to the enoyl-CoA hydratase/isomerase family. Homohexamer.

It catalyses the reaction 6-oxocyclohex-1-ene-1-carbonyl-CoA + 2 H2O = 3-hydroxy-6-carboxyhexanoyl-CoA + H(+). It participates in aromatic compound metabolism; benzoyl-CoA degradation. Functionally, involved in the central benzoyl-CoA catabolism. Catalyzes the addition of one molecule of water to the double bond and the hydrolytic cleavage of C-C bond in the alicyclic ring, 6-oxocyclohex-1-ene-1-carbonyl-CoA (6-OCH-CoA) to yield 3-hydroxypimelyl-CoA. This chain is 6-oxocyclohex-1-ene-1-carbonyl-CoA hydrolase, found in Syntrophus aciditrophicus (strain SB).